The primary structure comprises 697 residues: Heat shock protein homolog SSE1 (697 aa).

Residues 664–674 are compositionally biased toward low complexity; that stretch reads EMAEKLAAQRA. The tract at residues 664 to 697 is disordered; the sequence is EMAEKLAAQRAAEQKAQESKAESDKDAEGDIDLD. Residues 675–691 are compositionally biased toward basic and acidic residues; the sequence is AEQKAQESKAESDKDAE.

Belongs to the heat shock protein 70 family.

The protein resides in the cytoplasm. This Eremothecium gossypii (strain ATCC 10895 / CBS 109.51 / FGSC 9923 / NRRL Y-1056) (Yeast) protein is Heat shock protein homolog SSE1 (SSE1).